The following is a 193-amino-acid chain: Holliday junction branch migration complex subunit RuvA (193 aa).

Residues 1-64 (MIGRIAGTLI…EDAHLLYGFG (64 aa)) are domain I. Positions 65-143 (SAAERNTFRE…AELGHAPGAA (79 aa)) are domain II. Residues 144–151 (PVHDSAVD) form a flexible linker region. The tract at residues 151–193 (DILNALLALGYSEKEAATAIKQVPAGTGVSDGIKLALKALSKA) is domain III.

Belongs to the RuvA family. In terms of assembly, homotetramer. Forms an RuvA(8)-RuvB(12)-Holliday junction (HJ) complex. HJ DNA is sandwiched between 2 RuvA tetramers; dsDNA enters through RuvA and exits via RuvB. An RuvB hexamer assembles on each DNA strand where it exits the tetramer. Each RuvB hexamer is contacted by two RuvA subunits (via domain III) on 2 adjacent RuvB subunits; this complex drives branch migration. In the full resolvosome a probable DNA-RuvA(4)-RuvB(12)-RuvC(2) complex forms which resolves the HJ.

It localises to the cytoplasm. The RuvA-RuvB-RuvC complex processes Holliday junction (HJ) DNA during genetic recombination and DNA repair, while the RuvA-RuvB complex plays an important role in the rescue of blocked DNA replication forks via replication fork reversal (RFR). RuvA specifically binds to HJ cruciform DNA, conferring on it an open structure. The RuvB hexamer acts as an ATP-dependent pump, pulling dsDNA into and through the RuvAB complex. HJ branch migration allows RuvC to scan DNA until it finds its consensus sequence, where it cleaves and resolves the cruciform DNA. The chain is Holliday junction branch migration complex subunit RuvA from Cupriavidus pinatubonensis (strain JMP 134 / LMG 1197) (Cupriavidus necator (strain JMP 134)).